Reading from the N-terminus, the 101-residue chain is Small ribosomal subunit protein bS18c (101 aa).

The protein belongs to the bacterial ribosomal protein bS18 family. Part of the 30S ribosomal subunit.

It localises to the plastid. The protein resides in the chloroplast. This Coffea arabica (Arabian coffee) protein is Small ribosomal subunit protein bS18c.